The following is a 491-amino-acid chain: Chromosomal replication initiator protein DnaA (491 aa).

Residues Met-1–Asp-68 are domain I, interacts with DnaA modulators. Positions Asp-68 to Ser-146 are domain II. Residues Arg-147 to Ala-364 form a domain III, AAA+ region region. Residues Gly-190, Gly-192, Lys-193, and Thr-194 each contribute to the ATP site. Residues Lys-365 to His-491 form a domain IV, binds dsDNA region.

The protein belongs to the DnaA family. Oligomerizes as a right-handed, spiral filament on DNA at oriC.

It is found in the cytoplasm. In terms of biological role, plays an essential role in the initiation and regulation of chromosomal replication. ATP-DnaA binds to the origin of replication (oriC) to initiate formation of the DNA replication initiation complex once per cell cycle. Binds the DnaA box (a 9 base pair repeat at the origin) and separates the double-stranded (ds)DNA. Forms a right-handed helical filament on oriC DNA; dsDNA binds to the exterior of the filament while single-stranded (ss)DNA is stabiized in the filament's interior. The ATP-DnaA-oriC complex binds and stabilizes one strand of the AT-rich DNA unwinding element (DUE), permitting loading of DNA polymerase. After initiation quickly degrades to an ADP-DnaA complex that is not apt for DNA replication. Binds acidic phospholipids. The chain is Chromosomal replication initiator protein DnaA from Nitratidesulfovibrio vulgaris (strain ATCC 29579 / DSM 644 / CCUG 34227 / NCIMB 8303 / VKM B-1760 / Hildenborough) (Desulfovibrio vulgaris).